A 412-amino-acid chain; its full sequence is Polyferredoxin protein MvhB (412 aa).

4Fe-4S ferredoxin-type domains lie at 2–29 (IVIN…VKPE), 30–57 (DVIY…HEDI), 66–95 (KKIT…LVND), 96–127 (GKAS…IEGV), 138–166 (DKPI…LPKY), 168–197 (ESIE…ISGK), 207–236 (ENFT…PKSD), 237–265 (LTVS…LEVK), 275–304 (EGIV…VVSP), 311–344 (GLKK…LVEV), 356–385 (NRIQ…LTDD), and 386–412 (EKLP…LLIK). 4 residues coordinate [4Fe-4S] cluster: Cys-9, Cys-12, Cys-15, and Cys-19. Positions 75, 78, 81, 85, 107, 110, 113, 117, 146, 149, 152, 156, 177, 180, 183, 187, 216, 219, 222, 226, 245, 248, 251, 255, 284, 287, 290, 294, 324, 327, 330, 334, 365, 368, 371, and 375 each coordinate [4Fe-4S] cluster.

Requires [4Fe-4S] cluster as cofactor.

In Methanothermus fervidus, this protein is Polyferredoxin protein MvhB (mvhB).